A 372-amino-acid polypeptide reads, in one-letter code: Methylthioribose-1-phosphate isomerase 1 (372 aa).

Asp-254 acts as the Proton donor in catalysis.

The protein belongs to the eIF-2B alpha/beta/delta subunits family. MtnA subfamily.

The protein resides in the cytoplasm. Its subcellular location is the nucleus. The catalysed reaction is 5-(methylsulfanyl)-alpha-D-ribose 1-phosphate = 5-(methylsulfanyl)-D-ribulose 1-phosphate. It participates in amino-acid biosynthesis; L-methionine biosynthesis via salvage pathway; L-methionine from S-methyl-5-thio-alpha-D-ribose 1-phosphate: step 1/6. Its function is as follows. Catalyzes the interconversion of methylthioribose-1-phosphate (MTR-1-P) into methylthioribulose-1-phosphate (MTRu-1-P). This chain is Methylthioribose-1-phosphate isomerase 1, found in Trypanosoma cruzi (strain CL Brener).